Reading from the N-terminus, the 225-residue chain is Shikimate kinase (225 aa).

27 to 32 (GAGKTT) is a binding site for ATP. Thr-31 contacts Mg(2+). Substrate is bound by residues Asp-49, Arg-73, and Gly-95. Arg-132 is a binding site for ATP. Substrate is bound at residue Arg-150. The disordered stretch occupies residues 186–225 (GGSEPDEAADAAGGSEPDEAADAAGGSEPDEAADAAGGKR).

The protein belongs to the shikimate kinase family. Monomer. Requires Mg(2+) as cofactor.

It is found in the cytoplasm. The enzyme catalyses shikimate + ATP = 3-phosphoshikimate + ADP + H(+). The protein operates within metabolic intermediate biosynthesis; chorismate biosynthesis; chorismate from D-erythrose 4-phosphate and phosphoenolpyruvate: step 5/7. In terms of biological role, catalyzes the specific phosphorylation of the 3-hydroxyl group of shikimic acid using ATP as a cosubstrate. The sequence is that of Shikimate kinase from Frankia casuarinae (strain DSM 45818 / CECT 9043 / HFP020203 / CcI3).